The following is a 144-amino-acid chain: Superoxide dismutase [Mn], mitochondrial (144 aa).

Histidine 10, histidine 58, and aspartate 143 together coordinate Mn(2+).

This sequence belongs to the iron/manganese superoxide dismutase family. In terms of assembly, homotetramer. Mn(2+) is required as a cofactor.

It is found in the mitochondrion matrix. It catalyses the reaction 2 superoxide + 2 H(+) = H2O2 + O2. In terms of biological role, destroys superoxide anion radicals which are normally produced within the cells and which are toxic to biological systems. This Petromyzon marinus (Sea lamprey) protein is Superoxide dismutase [Mn], mitochondrial.